Here is an 88-residue protein sequence, read N- to C-terminus: MRVHDQRLRFDVTPKPMGLNGSSLITARSVALLLFLSLLLLILPPFLPPLPPPPATLLLLPLLLMILLIFLAFSPSNEPSLAVEPLDP.

Positions 25–76 (ITARSVALLLFLSLLLLILPPFLPPLPPPPATLLLLPLLLMILLIFLAFSPS) are organ Size Related (OSR) domain. 2 helical membrane passes run 30 to 50 (VALLLFLSLLLLILPPFLPPL) and 53 to 73 (PPATLLLLPLLLMILLIFLAF).

The protein belongs to the plant organ size related (OSR) protein family. As to expression, mostly expressed in flowers, and, to a lower extent, in leaves and cotyledons.

It localises to the membrane. Its subcellular location is the endoplasmic reticulum. The protein resides in the nucleus. The protein localises to the cytoplasm. In terms of biological role, together with ARGOS and ARL, regulates organ growth and final organ size. Promotes both cell expansion and proliferation-dependent organ growth, in an ANT-dependent manner. The chain is Protein ORGAN SIZE RELATED 1 from Arabidopsis thaliana (Mouse-ear cress).